The chain runs to 1201 residues: DNA-directed RNA polymerase subunit beta' (1201 aa).

Residues C60, C62, C75, and C78 each contribute to the Zn(2+) site. The Mg(2+) site is built by D449, D451, and D453. Zn(2+) is bound by residues C818, C892, C899, and C902.

This sequence belongs to the RNA polymerase beta' chain family. The RNAP catalytic core consists of 2 alpha, 1 beta, 1 beta' and 1 omega subunit. When a sigma factor is associated with the core the holoenzyme is formed, which can initiate transcription. Mg(2+) serves as cofactor. Requires Zn(2+) as cofactor.

It catalyses the reaction RNA(n) + a ribonucleoside 5'-triphosphate = RNA(n+1) + diphosphate. Its function is as follows. DNA-dependent RNA polymerase catalyzes the transcription of DNA into RNA using the four ribonucleoside triphosphates as substrates. The polypeptide is DNA-directed RNA polymerase subunit beta' (Listeria welshimeri serovar 6b (strain ATCC 35897 / DSM 20650 / CCUG 15529 / CIP 8149 / NCTC 11857 / SLCC 5334 / V8)).